The sequence spans 189 residues: Peptidyl-tRNA hydrolase (189 aa).

Tyr14 is a binding site for tRNA. His19 functions as the Proton acceptor in the catalytic mechanism. TRNA is bound by residues Phe64, Asn66, and Asn112.

It belongs to the PTH family. As to quaternary structure, monomer.

Its subcellular location is the cytoplasm. The catalysed reaction is an N-acyl-L-alpha-aminoacyl-tRNA + H2O = an N-acyl-L-amino acid + a tRNA + H(+). Hydrolyzes ribosome-free peptidyl-tRNAs (with 1 or more amino acids incorporated), which drop off the ribosome during protein synthesis, or as a result of ribosome stalling. Its function is as follows. Catalyzes the release of premature peptidyl moieties from peptidyl-tRNA molecules trapped in stalled 50S ribosomal subunits, and thus maintains levels of free tRNAs and 50S ribosomes. This Zymomonas mobilis subsp. mobilis (strain ATCC 31821 / ZM4 / CP4) protein is Peptidyl-tRNA hydrolase.